We begin with the raw amino-acid sequence, 511 residues long: Bifunctional purine biosynthesis protein PurH (511 aa).

The 145-residue stretch at 1–145 (MKQRALVSVS…KNHKFVSVIV (145 aa)) folds into the MGS-like domain.

The protein belongs to the PurH family.

The catalysed reaction is (6R)-10-formyltetrahydrofolate + 5-amino-1-(5-phospho-beta-D-ribosyl)imidazole-4-carboxamide = 5-formamido-1-(5-phospho-D-ribosyl)imidazole-4-carboxamide + (6S)-5,6,7,8-tetrahydrofolate. It catalyses the reaction IMP + H2O = 5-formamido-1-(5-phospho-D-ribosyl)imidazole-4-carboxamide. It functions in the pathway purine metabolism; IMP biosynthesis via de novo pathway; 5-formamido-1-(5-phospho-D-ribosyl)imidazole-4-carboxamide from 5-amino-1-(5-phospho-D-ribosyl)imidazole-4-carboxamide (10-formyl THF route): step 1/1. It participates in purine metabolism; IMP biosynthesis via de novo pathway; IMP from 5-formamido-1-(5-phospho-D-ribosyl)imidazole-4-carboxamide: step 1/1. The protein is Bifunctional purine biosynthesis protein PurH of Bacillus cereus (strain AH187).